Here is a 332-residue protein sequence, read N- to C-terminus: Formamidase (332 aa).

Residues 14–259 form the CN hydrolase domain; sequence FLAALIQYPV…WEIVTAEVYP (246 aa). The active-site Proton acceptor is the E60. Residue K132 is the Proton donor of the active site. Residue C165 is the Nucleophile of the active site.

It belongs to the carbon-nitrogen hydrolase superfamily. Aliphatic amidase family.

The catalysed reaction is formamide + H2O = formate + NH4(+). In terms of biological role, is an aliphatic amidase with a restricted substrate specificity, as it only hydrolyzes formamide. The protein is Formamidase of Bacillus cereus (strain Q1).